The sequence spans 128 residues: MFYSIVAIFVGAGLGALLRWFLSIGLNALLPEVPLGTLVSNLIGGYLIGIAVVAFATRAGLPPEWRLFVITGFMGGLTTFSTYSVEVMTHATQGEFGWALAVAALHLIGSFTLTGLGMWTARAWLAPA.

The next 4 helical transmembrane spans lie at 5-25 (IVAI…LSIG), 35-55 (LGTL…VVAF), 67-87 (LFVI…SVEV), and 96-116 (FGWA…LTGL). 2 residues coordinate Na(+): glycine 75 and threonine 78.

It belongs to the fluoride channel Fluc/FEX (TC 1.A.43) family.

The protein localises to the cell inner membrane. The enzyme catalyses fluoride(in) = fluoride(out). With respect to regulation, na(+) is not transported, but it plays an essential structural role and its presence is essential for fluoride channel function. Fluoride-specific ion channel. Important for reducing fluoride concentration in the cell, thus reducing its toxicity. This Burkholderia thailandensis (strain ATCC 700388 / DSM 13276 / CCUG 48851 / CIP 106301 / E264) protein is Fluoride-specific ion channel FluC.